Reading from the N-terminus, the 446-residue chain is MFLAQEVIRKKRDAVSLSDTDIQQFVNGICDDSVSEGQIAALAMAIYFRGMSAQEKTALTVAMRDSGDVLDWRQDNLNGPVLDKHSTGGVGDVVSLMLGPIVAACGGYVPMISGRGLGHTGGTLDKFDAIPGYQTAPDNRRFRDTVKQAGVAIIGQTGRLAPADSRFYATRDVTATVESIPLITASILAKKLAEGLDGLVMDVKAGNGAFMPGYDESRELAQSLVSVGRKLGVETTALITDMNQALGSAAGNAVEVQLAVDYLTGKRRDKRLHQVTKALSAELLVSGNLAKSTDQAEVMVENVLGSGLAAERFAKMVGSLGGPHDFLEKSDQYLPQANLRKPLKLPAEYHGLYLSEVNTRELGMAVVCLGGGRRKADDKLDLSVGMTDILTVGSKVDSESVIATVHASNESDWQEAADSILKALSFSSTPPEPDSVIYERIAGETE.

Belongs to the thymidine/pyrimidine-nucleoside phosphorylase family. As to quaternary structure, homodimer.

It catalyses the reaction thymidine + phosphate = 2-deoxy-alpha-D-ribose 1-phosphate + thymine. Its pathway is pyrimidine metabolism; dTMP biosynthesis via salvage pathway; dTMP from thymine: step 1/2. Its function is as follows. The enzymes which catalyze the reversible phosphorolysis of pyrimidine nucleosides are involved in the degradation of these compounds and in their utilization as carbon and energy sources, or in the rescue of pyrimidine bases for nucleotide synthesis. The chain is Thymidine phosphorylase from Idiomarina loihiensis (strain ATCC BAA-735 / DSM 15497 / L2-TR).